A 168-amino-acid polypeptide reads, in one-letter code: Small ribosomal subunit protein uS8 (168 aa).

The interval 59 to 93 is not found in other S8 sequences; that stretch reads EEYKKMKELAEKSPNPKMKRYLKQLEEYNKGTQYP.

This sequence belongs to the universal ribosomal protein uS8 family. Part of the 30S ribosomal subunit. Contacts proteins S5 and S12.

In terms of biological role, one of the primary rRNA binding proteins, it binds directly to 16S rRNA central domain where it helps coordinate assembly of the platform of the 30S subunit. This chain is Small ribosomal subunit protein uS8, found in Aquifex aeolicus (strain VF5).